Consider the following 731-residue polypeptide: DNA topoisomerase 1 (731 aa).

Residues 17–130 (KHLVIVESPA…KRIVFNEITP (114 aa)) enclose the Toprim domain. Mg(2+) is bound by residues Glu23 and Asp96. Positions 144 to 569 (DTAKVNAQKA…DFYPAFSEKV (426 aa)) constitute a Topo IA-type catalytic domain. The tract at residues 178–183 (SAGRVQ) is interaction with DNA. The O-(5'-phospho-DNA)-tyrosine intermediate role is filled by Tyr312. 3 C4-type zinc fingers span residues 591–617 (CSQC…FPEC), 628–657 (CPRP…FPVC), and 670–696 (CPQC…NPEC).

Belongs to the type IA topoisomerase family. As to quaternary structure, monomer. It depends on Mg(2+) as a cofactor.

The enzyme catalyses ATP-independent breakage of single-stranded DNA, followed by passage and rejoining.. Functionally, releases the supercoiling and torsional tension of DNA, which is introduced during the DNA replication and transcription, by transiently cleaving and rejoining one strand of the DNA duplex. Introduces a single-strand break via transesterification at a target site in duplex DNA. The scissile phosphodiester is attacked by the catalytic tyrosine of the enzyme, resulting in the formation of a DNA-(5'-phosphotyrosyl)-enzyme intermediate and the expulsion of a 3'-OH DNA strand. The free DNA strand then undergoes passage around the unbroken strand, thus removing DNA supercoils. Finally, in the religation step, the DNA 3'-OH attacks the covalent intermediate to expel the active-site tyrosine and restore the DNA phosphodiester backbone. This is DNA topoisomerase 1 from Treponema pallidum (strain Nichols).